Here is a 391-residue protein sequence, read N- to C-terminus: Protein-glutamate methylesterase/protein-glutamine glutaminase of group 2 operon (391 aa).

Residues 20–138 (RVMIVDDSVV…EPQAADIFKH (119 aa)) form the Response regulatory domain. A 4-aspartylphosphate modification is found at aspartate 71. One can recognise a CheB-type methylesterase domain in the interval 196-383 (PTAPRVLLIG…PLNQIGPKVV (188 aa)). Catalysis depends on residues serine 207, histidine 235, and aspartate 331.

This sequence belongs to the CheB family. Phosphorylated by CheA. Phosphorylation of the N-terminal regulatory domain activates the methylesterase activity.

It localises to the cytoplasm. The enzyme catalyses [protein]-L-glutamate 5-O-methyl ester + H2O = L-glutamyl-[protein] + methanol + H(+). It catalyses the reaction L-glutaminyl-[protein] + H2O = L-glutamyl-[protein] + NH4(+). In terms of biological role, involved in chemotaxis. Part of a chemotaxis signal transduction system that modulates chemotaxis in response to various stimuli. Catalyzes the demethylation of specific methylglutamate residues introduced into the chemoreceptors (methyl-accepting chemotaxis proteins or MCP) by CheR. Also mediates the irreversible deamidation of specific glutamine residues to glutamic acid. The polypeptide is Protein-glutamate methylesterase/protein-glutamine glutaminase of group 2 operon (Rhodopseudomonas palustris (strain ATCC BAA-98 / CGA009)).